The primary structure comprises 728 residues: Dynamin-like protein 1 (728 aa).

The tract at residues 1–119 (MKELFQKIWQ…ILQEKVQSID (119 aa)) is assembly domain, required for tetramerization. The Dynamin-type G domain occupies 159-442 (QNLEFNIAIT…LYAGEKSKIA (284 aa)). The tract at residues 169 to 176 (GVMNAGKS) is G1 motif. 171 to 177 (MNAGKSS) is a GDP binding site. The G2 motif stretch occupies residues 195 to 196 (ET). The G3 motif stretch occupies residues 298 to 301 (DTPG). The segment at 358–361 (TKAD) is G4 motif. K359 is a binding site for GDP. E388 is a region of interest (G5 motif). A GDP-binding site is contributed by 400-402 (SAK). Residues 470–695 (ENKQGVSEEN…LESLEKVLQS (226 aa)) form a required for liposome binding but not for tetramerization region.

The protein belongs to the TRAFAC class dynamin-like GTPase superfamily. Dynamin/Fzo/YdjA family. In terms of assembly, forms a 2:2 heterotetramer with DLP1. DLP2 forms a central back-to-back dimer flanked on each side by a DLP1 subunit. In the crystal structures the 2 DLP1 subunits are in very different conformations.

The protein localises to the cytoplasm. The protein resides in the cytosol. It catalyses the reaction GTP + H2O = GDP + phosphate + H(+). The heterotetrameric DLP1(2)-DLP2(2) complex tethers liposomes and may mediate their fusion. Initial binding is probably mediated by DLP1, while DLP2 couples DLP1 subunits and increases the effective reach of the complex up to 45 nm. The role of the nucleotide is unknown. This subunit alone weakly binds to liposomes; GTP, GDP, GMPPCP and GMPPNP do not change heterotetramer binding. Tetramerization is required for GTPase activity, suggesting the GTPase domains (dynamin-type G) from DLP1 and DLP2 must dimerize to reconstitute the GTPase active site. This Campylobacter jejuni subsp. jejuni serotype O:23/36 (strain 81-176) protein is Dynamin-like protein 1.